A 567-amino-acid polypeptide reads, in one-letter code: 2-succinyl-5-enolpyruvyl-6-hydroxy-3-cyclohexene-1-carboxylate synthase (567 aa).

This sequence belongs to the TPP enzyme family. MenD subfamily. Homodimer. Requires Mg(2+) as cofactor. The cofactor is Mn(2+). Thiamine diphosphate serves as cofactor.

The catalysed reaction is isochorismate + 2-oxoglutarate + H(+) = 5-enolpyruvoyl-6-hydroxy-2-succinyl-cyclohex-3-ene-1-carboxylate + CO2. It functions in the pathway quinol/quinone metabolism; 1,4-dihydroxy-2-naphthoate biosynthesis; 1,4-dihydroxy-2-naphthoate from chorismate: step 2/7. The protein operates within quinol/quinone metabolism; menaquinone biosynthesis. In terms of biological role, catalyzes the thiamine diphosphate-dependent decarboxylation of 2-oxoglutarate and the subsequent addition of the resulting succinic semialdehyde-thiamine pyrophosphate anion to isochorismate to yield 2-succinyl-5-enolpyruvyl-6-hydroxy-3-cyclohexene-1-carboxylate (SEPHCHC). The chain is 2-succinyl-5-enolpyruvyl-6-hydroxy-3-cyclohexene-1-carboxylate synthase from Yersinia pseudotuberculosis serotype IB (strain PB1/+).